A 236-amino-acid chain; its full sequence is MKKPLLLTLLCMILAGCDNPKSLESFTPEMASFSNEFDFDPLRGPVKDFSQTLMSENGEVAKQVTGTLSQEGCFDTLELHDLENNTELALVLDANYYRDAQTLEKKVQLQGKCQLAALPSAGVTWETDDNGFVVSATGKEMKVEYRYDSEGYPLGKTTINSQNTLSVTAKPSADPRKKLDYTAVSRVDDRQVGNVTLSCEYDAYANPVDCRLVIVDESVKPAVSHHYTIKNRIDYY.

The first 16 residues, Met-1–Gly-16, serve as a signal peptide directing secretion. Residue Cys-17 is the site of N-palmitoyl cysteine attachment. Residue Cys-17 is the site of S-diacylglycerol cysteine attachment.

It belongs to the UPF0257 family.

The protein localises to the cell membrane. The polypeptide is UPF0257 lipoprotein YnfC (Salmonella paratyphi C (strain RKS4594)).